A 310-amino-acid polypeptide reads, in one-letter code: ADP-L-glycero-D-manno-heptose-6-epimerase (310 aa).

Residues 10 to 11, 31 to 32, Lys38, Lys53, 75 to 79, and Asn92 each bind NADP(+); these read FI, DN, and EGACS. The active-site Proton acceptor is the Tyr140. Lys144 serves as a coordination point for NADP(+). Position 169 (Asn169) interacts with substrate. The NADP(+) site is built by Val170 and Lys178. Lys178 acts as the Proton acceptor in catalysis. Residues Ser180, His187, 201-204, Arg209, and Tyr272 contribute to the substrate site; that span reads FEGS.

The protein belongs to the NAD(P)-dependent epimerase/dehydratase family. HldD subfamily. Homopentamer. It depends on NADP(+) as a cofactor.

The enzyme catalyses ADP-D-glycero-beta-D-manno-heptose = ADP-L-glycero-beta-D-manno-heptose. Its pathway is nucleotide-sugar biosynthesis; ADP-L-glycero-beta-D-manno-heptose biosynthesis; ADP-L-glycero-beta-D-manno-heptose from D-glycero-beta-D-manno-heptose 7-phosphate: step 4/4. Functionally, catalyzes the interconversion between ADP-D-glycero-beta-D-manno-heptose and ADP-L-glycero-beta-D-manno-heptose via an epimerization at carbon 6 of the heptose. In Salmonella arizonae (strain ATCC BAA-731 / CDC346-86 / RSK2980), this protein is ADP-L-glycero-D-manno-heptose-6-epimerase.